A 219-amino-acid polypeptide reads, in one-letter code: MSDHRHRFLQLALTADALRFGQFTLKSGRLSPYFFNAGRFDSGSLLSQLGACYADAIDASGIKYDVVFGPAYKGIPLATAMACELAQRGRDLPLSFNRKEAKDHGEGGQLIGADMQGKRVLIVDDVITAGTAIREALGIIRAAGGTPAGIVVALDRQEIASETDRRSAAQSVAEEAGIPVIAVASLADLLDFASGNPELVGYRQPLEAYRAQYGVRSIR.

Lys-26 lines the 5-phospho-alpha-D-ribose 1-diphosphate pocket. Residue 34–35 coordinates orotate; it reads FF. 5-phospho-alpha-D-ribose 1-diphosphate is bound by residues 72-73, Arg-98, Lys-99, Lys-102, His-104, and 124-132; these read YK and DDVITAGTA. Thr-128 and Arg-156 together coordinate orotate.

Belongs to the purine/pyrimidine phosphoribosyltransferase family. PyrE subfamily. Homodimer. The cofactor is Mg(2+).

The catalysed reaction is orotidine 5'-phosphate + diphosphate = orotate + 5-phospho-alpha-D-ribose 1-diphosphate. Its pathway is pyrimidine metabolism; UMP biosynthesis via de novo pathway; UMP from orotate: step 1/2. Functionally, catalyzes the transfer of a ribosyl phosphate group from 5-phosphoribose 1-diphosphate to orotate, leading to the formation of orotidine monophosphate (OMP). This Stenotrophomonas maltophilia (strain K279a) protein is Orotate phosphoribosyltransferase.